A 373-amino-acid polypeptide reads, in one-letter code: Spore coat polysaccharide biosynthesis protein SpsE (373 aa).

An AFP-like domain is found at 305 to 367; sequence GIFTTAPIQK…GIVWDDILLK (63 aa).

It functions in the pathway spore coat biogenesis; spore coat polysaccharide biosynthesis. This chain is Spore coat polysaccharide biosynthesis protein SpsE (spsE), found in Bacillus subtilis (strain 168).